A 139-amino-acid chain; its full sequence is Cystatin cpi-1 (139 aa).

A signal peptide spans 1–19; the sequence is MRFILLIALVFAVLDGINC. Residue N29 is glycosylated (N-linked (GlcNAc...) asparagine). Residues 65–69 carry the Secondary area of contact motif; that stretch reads QVVAG. Cysteines 83 and 99 form a disulfide.

It belongs to the cystatin family.

Its function is as follows. Cysteine protease inhibitor which inhibits members of the peptidase C1 family. Does not inhibit asparaginyl endopeptidase. May play a protective role against exogenous cysteine proteases derived from soil bacteria or fungi, or rotting fruits and vegetation. In Caenorhabditis elegans, this protein is Cystatin cpi-1.